Consider the following 925-residue polypeptide: MNRFRVSKFRHTEARPPRRESWISDIRAGTAPSCRNHIKSSCSLIAFNSDRPGVLGIVPLQGQGEDKRRVAHLGCHSDLVTDLDFSPFDDFLLATGSADRTVKLWRLPGPGQALPSAPGVVLGPEDLPVEVLQFHPTSDGILVSAAGTTVKVWDAAKQQPLTELAAHGDLVQSAVWSRDGALVGTACKDKQLRIFDPRTKPRASQSTQAHENSRDSRLAWMGTWEHLVSTGFNQMREREVKLWDTRFFSSALASLTLDTSLGCLVPLLDPDSGLLVLAGKGERQLYCYEVVPQQPALSPVTQCVLESVLRGAALVPRQALAVMSCEVLRVLQLSDTAIVPIGYHVPRKAVEFHEDLFPDTAGCVPATDPHSWWAGDNQQVQKVSLNPACRPHPSFTSCLVPPAEPLPDTAQPAVMETPVGDADASEGFSSPPSSLTSPSTPSSLGPSLSSTSGIGTSPSLRSLQSLLGPSSKFRHAQGTVLHRDSHITNLKGLNLTTPGESDGFCANKLRVAVPLLSSGGQVAVLELRKPGRLPDTALPTLQNGAAVTDLAWDPFDPHRLAVAGEDARIRLWRVPAEGLEEVLTTPETVLTGHTEKICSLRFHPLAANVLASSSYDLTVRIWDLQAGADRLKLQGHQDQIFSLAWSPDGQQLATVCKDGRVRVYRPRSGPEPLQEGPGPKGGRGARIVWVCDGRCLLVSGFDSQSERQLLLYEAEALAGGPLAVLGLDVAPSTLLPSYDPDTGLVLLTGKGDTRVFLYELLPESPFFLECNSFTSPDPHKGLVLLPKTECDVREVELMRCLRLRQSSLEPVAFRLPRVRKEFFQDDVFPDTAVIWEPVLSAEAWLQGANGQPWLLSLQPPDMSPVSQAPREAPARRAPSSAQYLEEKSDQQKKEELLNAMVAKLGNREDPLPQDSFEGVDEDEWD.

WD repeat units lie at residues 75 to 115 (CHSD…QALP), 124 to 163 (PEDL…PLTE), 166 to 205 (AHGD…RASQ), and 209 to 253 (AHEN…SALA). The segment at 419 to 461 (VGDADASEGFSSPPSSLTSPSTPSSLGPSLSSTSGIGTSPSLR) is disordered. Residues 429–460 (SSPPSSLTSPSTPSSLGPSLSSTSGIGTSPSL) are compositionally biased toward low complexity. 2 positions are modified to phosphoserine: Ser462 and Ser465. Lys472 participates in a covalent cross-link: Glycyl lysine isopeptide (Lys-Gly) (interchain with G-Cter in ubiquitin). 3 WD repeats span residues 542-582 (QNGA…LEEV), 592-632 (GHTE…DRLK), and 635-674 (GHQD…EPLQ). Lys680 is covalently cross-linked (Glycyl lysine isopeptide (Lys-Gly) (interchain with G-Cter in ubiquitin)). Residues 728 to 768 (DVAPSTLLPSYDPDTGLVLLTGKGDTRVFLYELLPESPFFL) form a WD 8 repeat. The interval 858–925 (QPPDMSPVSQ…FEGVDEDEWD (68 aa)) is disordered. Over residues 866-882 (SQAPREAPARRAPSSAQ) the composition is skewed to low complexity. The segment covering 884–896 (LEEKSDQQKKEEL) has biased composition (basic and acidic residues). Residue Ser915 is modified to Phosphoserine.

It belongs to the WD repeat coronin family. As to quaternary structure, interacts with clathrin adapter AP1 complex. This interaction takes place at Golgi membranes and not AP1-positive endosomal membranes. Interacts (when ubiquitinated at Lys-472) with EPS15. In terms of processing, the membrane-associated form is phosphorylated on tyrosine residues. Post-translationally, ubiquitinated via 'Lys-33'-linked ubiquitin chains by the BCR(KLHL20) E3 ubiquitin ligase complex: 'Lys-33'-linked ubiquitination promotes interaction with EPS15 and facilitates actin polymerization at the trans-Golgi network, thereby facilitating post-Golgi trafficking. Deubiquitinated by ZRANB1/TRABID. In terms of tissue distribution, widely expressed. Expressed in the spleen, peripheral leukocytes, testes, brain, thymus and small intestine.

The protein localises to the golgi apparatus membrane. Its subcellular location is the golgi apparatus. The protein resides in the trans-Golgi network. It localises to the cytoplasmic vesicle. It is found in the cytoplasm. The protein localises to the cytosol. Its function is as follows. F-actin regulator involved in anterograde Golgi to endosome transport: upon ubiquitination via 'Lys-33'-linked ubiquitin chains by the BCR(KLHL20) E3 ubiquitin ligase complex, interacts with EPS15 and localizes to the trans-Golgi network, where it promotes actin polymerization, thereby facilitating post-Golgi trafficking. May play a role in the maintenance of the Golgi apparatus morphology. This chain is Coronin-7 (CORO7), found in Homo sapiens (Human).